The sequence spans 351 residues: Biotin synthase (351 aa).

The Radical SAM core domain maps to 44–262 (NRVQVSTLLS…LAVARILMPQ (219 aa)). [4Fe-4S] cluster contacts are provided by C59, C63, and C66. C103, C134, C194, and R266 together coordinate [2Fe-2S] cluster.

The protein belongs to the radical SAM superfamily. Biotin synthase family. As to quaternary structure, homodimer. Requires [4Fe-4S] cluster as cofactor. It depends on [2Fe-2S] cluster as a cofactor.

The catalysed reaction is (4R,5S)-dethiobiotin + (sulfur carrier)-SH + 2 reduced [2Fe-2S]-[ferredoxin] + 2 S-adenosyl-L-methionine = (sulfur carrier)-H + biotin + 2 5'-deoxyadenosine + 2 L-methionine + 2 oxidized [2Fe-2S]-[ferredoxin]. It participates in cofactor biosynthesis; biotin biosynthesis; biotin from 7,8-diaminononanoate: step 2/2. Its function is as follows. Catalyzes the conversion of dethiobiotin (DTB) to biotin by the insertion of a sulfur atom into dethiobiotin via a radical-based mechanism. The protein is Biotin synthase of Pseudomonas fluorescens (strain Pf0-1).